We begin with the raw amino-acid sequence, 765 residues long: Protein PAT1 homolog 1 (765 aa).

Disordered stretches follow at residues 1 to 98, 119 to 147, and 210 to 244; these read MFRF…DERG, GVGS…LAGP, and LPNR…SPPV. A compositionally biased stretch (acidic residues) spans 7-30; sequence LDDDCTLEEEEGLVEEEDEIDQFN. The segment covering 45-59 has biased composition (basic and acidic residues); the sequence is EEHTRLAELDERVRD. Basic and acidic residues predominate over residues 218-227; sequence SRDEGRDLSE. Phosphoserine is present on residues Ser235 and Ser236. Residues 235 to 244 show a composition bias toward low complexity; that stretch reads SSPVIGSPPV.

This sequence belongs to the PAT1 family. Interacts with ribonucleoprotein complex components.

It localises to the cytoplasm. The protein localises to the P-body. It is found in the nucleus. The protein resides in the PML body. Its subcellular location is the nucleus speckle. RNA-binding protein involved in deadenylation-dependent decapping of mRNAs, leading to the degradation of mRNAs. Acts as a scaffold protein that connects deadenylation and decapping machinery. Required for cytoplasmic mRNA processing body (P-body) assembly. This is Protein PAT1 homolog 1 (patl1) from Danio rerio (Zebrafish).